A 146-amino-acid chain; its full sequence is Ninjurin-1 (146 aa).

The interval 1-33 is disordered; that stretch reads MASEAMELNGGVNRRDDPGARPQQGRMSRNTPL. The Extracellular segment spans residues 1-75; that stretch reads MASEAMELNG…ELGPSFSFYI (75 aa). The segment at 37–66 is required to induce plasma membrane rupture; it reads HYANKKSAAESMLDIALLMANASQLKTVLE. The interval 41-52 is helix alpha1; the sequence is KKSAAESMLDIA. Residues 55–71 are helix alpha2; the sequence is MANASQLKTVLELGPSF. Asparagine 57 carries N-linked (GlcNAc...) asparagine glycosylation. Residues 76–100 traverse the membrane as a helical segment; sequence PLITLISISLTLQIIVGILLIFIVK. Residues 101 to 110 lie on the Cytoplasmic side of the membrane; the sequence is WNLNDSSKHY. The helical transmembrane segment at 111–135 threads the bilayer; sequence ILNLLENIVTALVFIVVVVNVFITA. Topologically, residues 136-146 are extracellular; the sequence is FGVQRPDDKTS.

Belongs to the ninjurin family. As to quaternary structure, homooligomer; in response to death stimuli, homooligomerizes into long, highly branched filaments and large, ring-shaped structures in the membrane. In terms of assembly, homodimer; in absence of death stimuli, forms an inactive homodimer. Homooligomer; in response to death stimuli, homooligomerizes into long, highly branched filaments and large, ring-shaped structures in the membrane.

The protein resides in the cell membrane. It is found in the synaptic cell membrane. With respect to regulation, in normal conditions, NINJ1 is inactivated. In response to death stimuli, homooligomerizes and disrupts membrane integrity by introducing the hydrophilic faces of alpha1 and alpha2 helices into the hydrophobic membrane. Homooligomerization and ability to mediate plasma membrane rupture is inhibited by glycine; it is unclear whether glycine directly or indirectly inhibits homooligomerization. Its activity is regulated as follows. In response to death stimuli, homooligomerizes and disrupts membrane integrity by introducing the hydrophilic faces of alpha1 and alpha2 helices into the hydrophobic membrane. Homooligomerization and ability to mediate plasma membrane rupture is inhibited by glycine; it is unclear whether glycine directly or indirectly inhibits homooligomerization. In normal conditions, NINJ1 is autoinhibited via formation of a homodimer: in the inactive homodimer, the alpha1 and alpha2 helices (residues 41-71) form a single transmembrane region without a kink, in which hydrophilic faces of alpha1 and alpha2 helices are sequestered. Functionally, effector of various programmed cell death, such as pyroptosis and necroptosis, which mediates plasma membrane rupture (cytolysis). Oligomerizes in response to death stimuli and forms ring-like structures on the plasma membrane: acts by cutting and shedding membrane disks, like a cookie cutter, leading to membrane damage and loss that cannot be repaired by the cell. Plasma membrane rupture leads to release intracellular molecules named damage-associated molecular patterns (DAMPs) that propagate the inflammatory response. Mechanistically, mediates plasma membrane rupture by introducing hydrophilic faces of 2 alpha helices into the hydrophobic membrane. Induces plasma membrane rupture downstream of Gasdermin (GSDMA, GSDMB, GSDMC, GSDMD, or GSDME) or MLKL during pyroptosis or necroptosis, respectively. Also acts as an effector of PANoptosis and ferroptosis. Induces plasma membrane rupture in response to cell swelling caused by osmotic stress. Acts as a regulator of Toll-like receptor 4 (TLR4) signaling triggered by lipopolysaccharide (LPS) during systemic inflammation; directly binds LPS. Involved in leukocyte migration during inflammation by promoting transendothelial migration of macrophages via homotypic binding. Promotes the migration of monocytes across the brain endothelium to central nervous system inflammatory lesions. Also acts as a homophilic transmembrane adhesion molecule involved in various processes such as axonal growth, cell chemotaxis and angiogenesis. Promotes cell adhesion by mediating homophilic interactions via its extracellular N-terminal adhesion motif (N-NAM). Also involved in striated muscle growth and differentiation. This Danio rerio (Zebrafish) protein is Ninjurin-1.